The sequence spans 943 residues: WD repeat-containing protein 3 (943 aa).

WD repeat units lie at residues 21 to 60 (SQKG…KILI), 63 to 102 (GLKQ…GNVT), 105 to 144 (GHKA…GLYR), 147 to 186 (GHKD…CFKT), and 189 to 228 (GHRT…EIED). Serine 240 and serine 241 each carry phosphoserine. Residue threonine 257 is modified to Phosphothreonine. The stretch at 277–316 (EGRDRVVNLAVDKTGRILACHGTDSVLELFCILSKKEIQK) is one WD 6 repeat. The disordered stretch occupies residues 326-345 (RKKAKLHSSKGEEEDPEVNV). WD repeat units follow at residues 413–451 (GHRS…CIRT), 453–493 (TCEY…ETID), 494–533 (AHDG…DENS), 547–586 (QLDE…FFLS), 589–630 (GHKL…KSLF), 631–670 (AHDD…HIQT), and 673–712 (GHHQ…LILE). Glycyl lysine isopeptide (Lys-Gly) (interchain with G-Cter in SUMO2) cross-links involve residues lysine 474 and lysine 529. A Phosphoserine modification is found at serine 726.

The protein belongs to the WD repeat WDR3/UTP12 family. Part of the small subunit (SSU) processome, composed of more than 70 proteins and the RNA chaperone small nucleolar RNA (snoRNA) U3. Ubiquitous.

It localises to the nucleus. The protein localises to the nucleolus. In terms of biological role, part of the small subunit (SSU) processome, first precursor of the small eukaryotic ribosomal subunit. During the assembly of the SSU processome in the nucleolus, many ribosome biogenesis factors, an RNA chaperone and ribosomal proteins associate with the nascent pre-rRNA and work in concert to generate RNA folding, modifications, rearrangements and cleavage as well as targeted degradation of pre-ribosomal RNA by the RNA exosome. This is WD repeat-containing protein 3 from Homo sapiens (Human).